The chain runs to 358 residues: Peptide chain release factor 1 (358 aa).

Gln-235 carries the post-translational modification N5-methylglutamine. Positions 284–309 (KVESERSASRKSQVGSGDRSERIRTY) are disordered.

Belongs to the prokaryotic/mitochondrial release factor family. Methylated by PrmC. Methylation increases the termination efficiency of RF1.

It is found in the cytoplasm. Its function is as follows. Peptide chain release factor 1 directs the termination of translation in response to the peptide chain termination codons UAG and UAA. The chain is Peptide chain release factor 1 from Bartonella tribocorum (strain CIP 105476 / IBS 506).